A 124-amino-acid polypeptide reads, in one-letter code: uncharacterized protein (124 aa).

The dksA C4-type; degenerate zinc-finger motif lies at Cys-73–Ala-94.

This is an uncharacterized protein from Bacillus subtilis (strain 168).